A 925-amino-acid chain; its full sequence is Serine/threonine-protein phosphatase 1 regulatory subunit 10 (925 aa).

The interval 1–348 (MGSGPIDPKE…EPAPPSEAMD (348 aa)) is interaction with TOX4. The region spanning 73-147 (KLLNNWLTYS…SDWMAVIRSQ (75 aa)) is the TFIIS N-terminal domain. A disordered region spans residues 147–211 (QSSTQPAEKD…APSHAKFRST (65 aa)). Composition is skewed to basic and acidic residues over residues 153–166 (AEKD…EGKS) and 174–196 (PLTE…EKPK). Residues Lys-179 and Lys-262 each participate in a glycyl lysine isopeptide (Lys-Gly) (interchain with G-Cter in SUMO2) cross-link. 3 disordered regions span residues 304 to 398 (KIKK…KRKT), 536 to 555 (TLEP…SKLP), and 587 to 890 (SIMG…HGGD). Residue Ser-313 is modified to Phosphoserine. The segment covering 325–336 (KTSTEPSTAKPS) has biased composition (low complexity). The interval 357-433 (PPVEVPELMD…NKIKDFGEAA (77 aa)) is necessary for interaction with PPP1CA. At Ser-382 the chain carries Phosphoserine. The segment at 393 to 408 (GRKRKTVTWPEEGKLR) is necessary for interaction with PPP1CC. Residues 394 to 423 (RKRKTVTWPEEGKLREYFYFELDETERVNV) carry the PP1-binding motif motif. Position 398 is a phosphothreonine; by PKA (Thr-398). The tract at residues 418–619 (TERVNVNKIK…IKQMLVPHGL (202 aa)) is interaction with WDR82. Over residues 540-551 (GGAGGSPDGAGG) the composition is skewed to gly residues. Phosphoserine is present on residues Ser-545 and Ser-591. Basic and acidic residues predominate over residues 596-611 (PSEELLKQPDYSDKIK). Residues 644–655 (PPGPGGPMPGPH) are compositionally biased toward pro residues. The span at 656–665 (GGPGGPGGPV) shows a compositional bias: gly residues. Arg-668 is modified (omega-N-methylarginine). Residues 679 to 693 (GDPFWDGPGDPMRGG) show a composition bias toward low complexity. Residues Arg-696 and Arg-741 each carry the omega-N-methylarginine modification. Gly residues-rich tracts occupy residues 728-766 (ARGG…GMSS) and 775-829 (GPGG…AGGG). 2 stretches are compositionally biased toward basic and acidic residues: residues 846–871 (PHDV…HDGP) and 879–890 (RGHDGGHNHGGD). A C3H1-type zinc finger spans residues 891-919 (MSKRPVCRHFMMKGNCRYENNCAFYHPGV).

In terms of assembly, component of the PNUTS-PP1 complex (also named PTW/PP1 complex), composed of PPP1R10/PNUTS, TOX4, WDR82, and PPP1CA (or PPP1CB or PPP1CC). Post-translationally, phosphorylated on Ser-398 by PKA within the region necessary for interaction with PPP1CA.

Its subcellular location is the nucleus. The protein resides in the chromosome. Substrate-recognition component of the PNUTS-PP1 protein phosphatase complex, a protein phosphatase 1 (PP1) complex that promotes RNA polymerase II transcription pause-release, allowing transcription elongation. Promoter-proximal pausing by RNA polymerase II is a transcription halt following transcription initiation but prior to elongation, which acts as a checkpoint to control that transcripts are favorably configured for transcriptional elongation. The PNUTS-PP1 complex mediates the release of RNA polymerase II from promoter-proximal region of genes by catalyzing dephosphorylation of proteins involved in transcription, such as AFF4, CDK9, MEPCE, INTS12, NCBP1, POLR2M/GDOWN1 and SUPT6H. The PNUTS-PP1 complex also regulates RNA polymerase II transcription termination by mediating dephosphorylation of SUPT5H in termination zones downstream of poly(A) sites, thereby promoting deceleration of RNA polymerase II transcription. PNUTS-PP1 complex is also involved in the response to replication stress by mediating dephosphorylation of POLR2A at 'Ser-5' of the CTD, promoting RNA polymerase II degradation. The PNUTS-PP1 complex also plays a role in the control of chromatin structure and cell cycle progression during the transition from mitosis into interphase. PNUTS-PP1 complex mediates dephosphorylation of MYC, promoting MYC stability by preventing MYC ubiquitination by the SCF(FBXW7) complex. In addition to acts as a substrate-recognition component, PPP1R10/PNUTS also acts as a nuclear targeting subunit for the PNUTS-PP1 complex. In some context, PPP1R10/PNUTS also acts as an inhibitor of protein phosphatase 1 (PP1) activity by preventing access to substrates, such as RB. This is Serine/threonine-protein phosphatase 1 regulatory subunit 10 (PPP1R10) from Sus scrofa (Pig).